Consider the following 149-residue polypeptide: Large ribosomal subunit protein uL11 (149 aa).

This sequence belongs to the universal ribosomal protein uL11 family. As to quaternary structure, part of the ribosomal stalk of the 50S ribosomal subunit. Interacts with L10 and the large rRNA to form the base of the stalk. L10 forms an elongated spine to which L12 dimers bind in a sequential fashion forming a multimeric L10(L12)X complex. One or more lysine residues are methylated.

Its function is as follows. Forms part of the ribosomal stalk which helps the ribosome interact with GTP-bound translation factors. The chain is Large ribosomal subunit protein uL11 from Xanthobacter autotrophicus (strain ATCC BAA-1158 / Py2).